A 157-amino-acid polypeptide reads, in one-letter code: Endoribonuclease YbeY (157 aa).

Zn(2+) contacts are provided by His-114, His-118, and His-124.

It belongs to the endoribonuclease YbeY family. It depends on Zn(2+) as a cofactor.

The protein localises to the cytoplasm. In terms of biological role, single strand-specific metallo-endoribonuclease involved in late-stage 70S ribosome quality control and in maturation of the 3' terminus of the 16S rRNA. The protein is Endoribonuclease YbeY of Yersinia pseudotuberculosis serotype O:1b (strain IP 31758).